The primary structure comprises 562 residues: Arginine--tRNA ligase (562 aa).

The 'HIGH' region signature appears at 122-132 (PNIAKPISMGH).

It belongs to the class-I aminoacyl-tRNA synthetase family. As to quaternary structure, monomer.

It localises to the cytoplasm. The catalysed reaction is tRNA(Arg) + L-arginine + ATP = L-arginyl-tRNA(Arg) + AMP + diphosphate. The chain is Arginine--tRNA ligase from Pediococcus pentosaceus (strain ATCC 25745 / CCUG 21536 / LMG 10740 / 183-1w).